A 540-amino-acid polypeptide reads, in one-letter code: Membrane protein insertase YidC (540 aa).

The helical transmembrane segment at 6–26 (NILLIALALVSFLLFQQWQVA) threads the bilayer. Low complexity predominate over residues 36 to 47 (QAQSSSSLPAPS). A disordered region spans residues 36–63 (QAQSSSSLPAPSFADELDPVPGQQQASA). 4 helical membrane-spanning segments follow: residues 342 to 362 (AFIQSFVGNWGVAIICLTFIV), 417 to 437 (LGGCLPLVLQMPIFIALYWAL), 455 to 475 (LSAQDPYYILPLLMGASMFLI), and 496 to 516 (PVMFTFFFLFFPSGLVLYWLV).

Belongs to the OXA1/ALB3/YidC family. Type 1 subfamily. Interacts with the Sec translocase complex via SecD. Specifically interacts with transmembrane segments of nascent integral membrane proteins during membrane integration.

It localises to the cell inner membrane. In terms of biological role, required for the insertion and/or proper folding and/or complex formation of integral membrane proteins into the membrane. Involved in integration of membrane proteins that insert both dependently and independently of the Sec translocase complex, as well as at least some lipoproteins. Aids folding of multispanning membrane proteins. The sequence is that of Membrane protein insertase YidC from Vibrio parahaemolyticus serotype O3:K6 (strain RIMD 2210633).